The primary structure comprises 69 residues: MKKGIHPEMKLITVKCACGAEHKFYSAKENVRIDVCSSCHPFYKGAGAAGMIVDTEGRIEKFKKKYNLD.

The Zn(2+) site is built by cysteine 16, cysteine 18, cysteine 36, and cysteine 39.

It belongs to the bacterial ribosomal protein bL31 family. Type A subfamily. As to quaternary structure, part of the 50S ribosomal subunit. Zn(2+) is required as a cofactor.

Functionally, binds the 23S rRNA. The protein is Large ribosomal subunit protein bL31 of Thermosipho africanus (strain TCF52B).